The primary structure comprises 267 residues: 3-methyl-2-oxobutanoate hydroxymethyltransferase (267 aa).

2 residues coordinate Mg(2+): Asp-46 and Asp-85. 3-methyl-2-oxobutanoate is bound by residues 46–47, Asp-85, and Lys-115; that span reads DS. Glu-117 lines the Mg(2+) pocket. Glu-184 functions as the Proton acceptor in the catalytic mechanism.

It belongs to the PanB family. As to quaternary structure, homodecamer; pentamer of dimers. The cofactor is Mg(2+).

The protein resides in the cytoplasm. It carries out the reaction 3-methyl-2-oxobutanoate + (6R)-5,10-methylene-5,6,7,8-tetrahydrofolate + H2O = 2-dehydropantoate + (6S)-5,6,7,8-tetrahydrofolate. Its pathway is cofactor biosynthesis; (R)-pantothenate biosynthesis; (R)-pantoate from 3-methyl-2-oxobutanoate: step 1/2. Catalyzes the reversible reaction in which hydroxymethyl group from 5,10-methylenetetrahydrofolate is transferred onto alpha-ketoisovalerate to form ketopantoate. The sequence is that of 3-methyl-2-oxobutanoate hydroxymethyltransferase from Geobacter metallireducens (strain ATCC 53774 / DSM 7210 / GS-15).